The primary structure comprises 375 residues: Methylthioribose-1-phosphate isomerase (375 aa).

The active-site Proton donor is the D259.

It belongs to the eIF-2B alpha/beta/delta subunits family. MtnA subfamily.

The protein localises to the cytoplasm. Its subcellular location is the nucleus. It carries out the reaction 5-(methylsulfanyl)-alpha-D-ribose 1-phosphate = 5-(methylsulfanyl)-D-ribulose 1-phosphate. The protein operates within amino-acid biosynthesis; L-methionine biosynthesis via salvage pathway; L-methionine from S-methyl-5-thio-alpha-D-ribose 1-phosphate: step 1/6. Catalyzes the interconversion of methylthioribose-1-phosphate (MTR-1-P) into methylthioribulose-1-phosphate (MTRu-1-P). This chain is Methylthioribose-1-phosphate isomerase, found in Populus trichocarpa (Western balsam poplar).